The primary structure comprises 122 residues: Acidic phospholipase A2 2 (122 aa).

7 disulfides stabilise this stretch: cysteine 26–cysteine 115, cysteine 28–cysteine 44, cysteine 43–cysteine 95, cysteine 49–cysteine 122, cysteine 50–cysteine 88, cysteine 57–cysteine 81, and cysteine 75–cysteine 86. Ca(2+) contacts are provided by tyrosine 27, glycine 29, and glycine 31. Histidine 47 is a catalytic residue. Aspartate 48 serves as a coordination point for Ca(2+). Aspartate 89 is an active-site residue.

It belongs to the phospholipase A2 family. Group II subfamily. D49 sub-subfamily. Requires Ca(2+) as cofactor. In terms of tissue distribution, expressed by the venom gland.

The protein resides in the secreted. The enzyme catalyses a 1,2-diacyl-sn-glycero-3-phosphocholine + H2O = a 1-acyl-sn-glycero-3-phosphocholine + a fatty acid + H(+). Functionally, snake venom phospholipase A2 (PLA2) that has high lipolytic activity. PLA2 catalyzes the calcium-dependent hydrolysis of the 2-acyl groups in 3-sn-phosphoglycerides. This Craspedocephalus gramineus (Bamboo pit viper) protein is Acidic phospholipase A2 2.